A 248-amino-acid polypeptide reads, in one-letter code: Small ribosomal subunit protein uS2 (248 aa).

This sequence belongs to the universal ribosomal protein uS2 family.

This is Small ribosomal subunit protein uS2 from Alkalilimnicola ehrlichii (strain ATCC BAA-1101 / DSM 17681 / MLHE-1).